The chain runs to 1156 residues: Pesticidal crystal protein Cry9Aa (1156 aa).

The propeptide at 1-23 (MNQNKHGIIGASNCGCASDDVAK) is removed in mature form.

This sequence belongs to the delta endotoxin family.

Functionally, promotes colloidosmotic lysis by binding to the midgut epithelial cells of insects. This protein is toxic to Galleria mellonella. In Bacillus thuringiensis subsp. galleriae, this protein is Pesticidal crystal protein Cry9Aa (cry9Aa).